The chain runs to 280 residues: ATP synthase gamma chain (280 aa).

It belongs to the ATPase gamma chain family. F-type ATPases have 2 components, CF(1) - the catalytic core - and CF(0) - the membrane proton channel. CF(1) has five subunits: alpha(3), beta(3), gamma(1), delta(1), epsilon(1). CF(0) has three main subunits: a, b and c.

Its subcellular location is the cell membrane. Functionally, produces ATP from ADP in the presence of a proton gradient across the membrane. The gamma chain is believed to be important in regulating ATPase activity and the flow of protons through the CF(0) complex. The chain is ATP synthase gamma chain from Mycoplasma mycoides subsp. mycoides SC (strain CCUG 32753 / NCTC 10114 / PG1).